Consider the following 146-residue polypeptide: Large ribosomal subunit protein uL23m (146 aa).

The segment at 108–138 is disordered; it reads PDLFPEKDPRSPEPLEEELPQQRQSSDLRCP. The segment covering 111–120 has biased composition (basic and acidic residues); the sequence is FPEKDPRSPE.

This sequence belongs to the universal ribosomal protein uL23 family. As to quaternary structure, component of the mitochondrial ribosome large subunit (39S) which comprises a 16S rRNA and about 50 distinct proteins.

The protein resides in the mitochondrion. The polypeptide is Large ribosomal subunit protein uL23m (Mrpl23) (Mus musculus (Mouse)).